A 354-amino-acid polypeptide reads, in one-letter code: Guanine nucleotide-binding protein G(i) subunit alpha-1 (354 aa).

A lipid anchor (N-myristoyl glycine) is attached at Gly-2. Cys-3 is lipidated: S-palmitoyl cysteine. One can recognise a G-alpha domain in the interval 32–354; the sequence is REVKLLLLGA…KNNLKDCGLF (323 aa). The G1 motif stretch occupies residues 35–48; that stretch reads KLLLLGAGESGKST. Residues 43-48, 150-151, and 175-178 each bind GTP; these read ESGKST, DS, and LRTR. Residue Ser-47 participates in Mg(2+) binding. A G2 motif region spans residues 173-181; it reads DVLRTRVKT. Thr-181 is a Mg(2+) binding site. A G3 motif region spans residues 196-205; it reads FKMFDVGGQR. GTP is bound by residues 200–204, 269–272, and Ala-326; these read DVGGQ and NKKD. The interval 265 to 272 is G4 motif; sequence ILFLNKKD. The interval 324-329 is G5 motif; the sequence is TCATDT.

Belongs to the G-alpha family. G(i/o/t/z) subfamily. In terms of assembly, heterotrimeric G proteins are composed of 3 units; alpha, beta and gamma. The alpha chain contains the guanine nucleotide binding site. Part of a spindle orientation complex at least composed of GNAI1, GPSM2 and NUMA1. Identified in complex with the beta subunit GNB1 and the gamma subunit GNG1. Identified in complex with the beta subunit GNB1 and the gamma subunit GNG2. Component of the TAS2R14-GNAI1 complex, consisting of TAS2R14, GNAI1, GNB1 and GNG2; within the complex interacts with TAS2R14; this complex plays a role in the perception of bitterness. GTP binding causes dissociation of the heterotrimer, liberating the individual subunits so that they can interact with downstream effector proteins. Interacts (GDP-bound form) with GPSM1; this inhibits guanine nucleotide exchange and GTP binding. Interacts (GDP-bound form) with GPSM2 (via GoLoco domains); this inhibits guanine nucleotide exchange. Interacts with RGS10; this strongly enhances GTP hydrolysis. Interacts with RGS1 and RGS16; this strongly enhances GTPase activity. Interacts with RGS4. Interacts with RGS12. Interacts (via active GTP- or inactive GDP-bound forms) with RGS14 (via RGS and GoLoco domains). Interacts with RGS3, RGS6, RGS7, RGS8, RGS17, RGS18 and RGS20 (in vitro). Interacts (GDP-bound form) with RIC8A (via C-terminus); promoting GNAI1 folding and association with the plasma membrane. Interacts (inactive GDP-bound form) with NUCB1 (via GBA motif); the interaction leads to activation of GNAI1. Interacts (inactive GDP-bound form) with CCDC88C/DAPLE (via GBA motif); the interaction leads to activation of GNAI1. Interacts (inactive GDP-bound form) with CCDC8A/GIV (via GBA motif). In terms of processing, myristoylation at Gly-2 is required for membrane anchoring before palmitoylation. Post-translationally, palmitoylation at Cys-3 varies with membrane lipid composition.

The protein resides in the nucleus. It is found in the cytoplasm. Its subcellular location is the cell membrane. The protein localises to the cytoskeleton. It localises to the microtubule organizing center. The protein resides in the centrosome. It is found in the cell cortex. Its subcellular location is the membrane. It catalyses the reaction GTP + H2O = GDP + phosphate + H(+). In terms of biological role, guanine nucleotide-binding proteins (G proteins) function as transducers downstream of G protein-coupled receptors (GPCRs) in numerous signaling cascades. The alpha chain contains the guanine nucleotide binding site and alternates between an active, GTP-bound state and an inactive, GDP-bound state. Signaling by an activated GPCR promotes GDP release and GTP binding. The alpha subunit has a low GTPase activity that converts bound GTP to GDP, thereby terminating the signal. Both GDP release and GTP hydrolysis are modulated by numerous regulatory proteins. Signaling is mediated via effector proteins, such as adenylate cyclase. Inhibits adenylate cyclase activity of ADCY1, ADCY5 and ADCY6, leading to decreased intracellular cAMP levels. The inactive GDP-bound form prevents the association of RGS14 with centrosomes and is required for the translocation of RGS14 from the cytoplasm to the plasma membrane. Required for normal cytokinesis during mitosis. Required for cortical dynein-dynactin complex recruitment during metaphase. The sequence is that of Guanine nucleotide-binding protein G(i) subunit alpha-1 (GNAI1) from Bos taurus (Bovine).